The primary structure comprises 279 residues: MEKNVCKMTDDSIFLIDIEKILKTKAGKKYKYIPRFVVSYLKHIVHQDELNVFLKDSKNKVGVDFLEACMEFLDAKVEIKGLENLPENGKCTFVSNHPLGGQDGVALGYILGKHYNGNVRYLVNDLLMNLHGLAPLCIPINKTGSQSRDFPKMVEAGFASDNHIIMFPAGLCSRRQGGEIKDLEWKKTFVTKSIETHRDVVPLHFEGRNSDFFYNLANICKALGIKFNIAMLYLADEMLKNRHKTFTLTIGKPIPWQTFDKTKTPAQWAQFVKDVVYKL.

It belongs to the O-acyltransferase GlsA family.

The enzyme catalyses a lyso-glycine lipid + a fatty acyl-[ACP] = a glycine lipid + holo-[ACP]. It catalyses the reaction N-[(3R)-3-hydroxyhexadecanoyl]-glycine + hexadecanoyl-[ACP] = N-[(3R)-3-(hexadecanoyloxy)hexadecanoyl]-glycine + holo-[ACP]. The protein operates within lipid metabolism. Is involved in the production of glycine lipids (GL), which are phosphorus-free membrane lipids. Catalyzes the second step of GL biosynthesis, i.e. the O-acylation of the hydroxyl group of lyso-glycine lipids, resulting in the production of the mature diacylated glycine lipids. The sequence is that of Lyso-glycine lipid O-acyltransferase from Phocaeicola vulgatus (strain ATCC 8482 / DSM 1447 / JCM 5826 / CCUG 4940 / NBRC 14291 / NCTC 11154) (Bacteroides vulgatus).